Here is a 567-residue protein sequence, read N- to C-terminus: tRNA (uracil-O(2)-)-methyltransferase (567 aa).

Phosphoserine is present on S107.

It belongs to the TRM44 family.

It localises to the cytoplasm. It catalyses the reaction uridine(44) in tRNA(Ser) + S-adenosyl-L-methionine = 2'-O-methyluridine(44) in tRNA(Ser) + S-adenosyl-L-homocysteine + H(+). TRNA (uracil-O(2)-)-methyltransferase, which catalyzes the formation of O(2)-methyluracil at position 44 (Um44) in tRNA(Ser). The protein is tRNA (uracil-O(2)-)-methyltransferase (TRM44) of Saccharomyces cerevisiae (strain ATCC 204508 / S288c) (Baker's yeast).